A 1809-amino-acid chain; its full sequence is Proprotein convertase subtilisin/kexin type 5 (1809 aa).

Residues 1 to 34 (MDWGWGSRCCRPGRRDLLCVLALLAGCLLPVCRT) form the signal peptide. Residues 35-116 (RVYTNHWAVK…QQVVKKRTKR (82 aa)) constitute a propeptide that is removed on maturation. At 117–1700 (DYDLSRAQST…DTVFHEHTKT (1584 aa)) the chain is on the extracellular side. The region spanning 136–455 (MWYMHCSDNT…FGLMDAEAMV (320 aa)) is the Peptidase S8 domain. Catalysis depends on charge relay system residues Asp-173 and His-214. 2 N-linked (GlcNAc...) asparagine glycosylation sites follow: Asn-227 and Asn-383. Ser-388 functions as the Charge relay system in the catalytic mechanism. The P/Homo B domain maps to 463 to 603 (TVPQQHVCVE…SLVLYGTSVQ (141 aa)). The Cell attachment site signature appears at 521-523 (RGD). FU repeat units follow at residues 632 to 682 (EDYA…GHFH), 685 to 732 (KKRC…GSYQ), 736 to 779 (KNIC…GQFF), 781 to 826 (GHDC…SYYL), 834 to 881 (YKSC…GEYI), 884 to 929 (QGHC…WKFE), 931 to 964 (KKQC…QDSE), 965 to 1010 (YGEC…KTFG), 1012 to 1054 (KWEC…GFYG), 1058 to 1099 (LGEC…PTWP), 1137 to 1179 (TRQY…GTWL), 1183 to 1230 (SSSC…GFYA), 1232 to 1276 (DGVC…KHVA), 1278 to 1321 (EGVC…NFYP), 1323 to 1369 (MRQC…GTYK), 1373 to 1418 (NDEC…IEYW), 1422 to 1467 (SHRC…GYHT), 1471 to 1516 (SHQC…GYYG), 1520 to 1567 (SGRC…HYYA), 1571 to 1616 (AQTC…GEYR), and 1622 to 1669 (NFNC…SHPH). The tract at residues 638–1685 (CDPECSEVGC…DCQSSTDECI (1048 aa)) is CRM (Cys-rich motif). N-linked (GlcNAc...) asparagine glycosylation occurs at Asn-667. N-linked (GlcNAc...) asparagine glycans are attached at residues Asn-754, Asn-804, and Asn-854. N-linked (GlcNAc...) asparagine glycans are attached at residues Asn-1642 and Asn-1664. A helical membrane pass occupies residues 1701 to 1721 (ALLVTSGAMLLLLLGAAVVVW). The Cytoplasmic portion of the chain corresponds to 1722–1809 (RKSRSQPVAK…EYDDESYSYQ (88 aa)). 2 AC regions span residues 1757 to 1776 (VIEY…IVYM) and 1788 to 1809 (YGLL…YSYQ).

This sequence belongs to the peptidase S8 family. Expressed in the intestine, brain, adrenal gland, anterior pituitary, thyroid, ovaries, testis and lung. Highest levels are found in the gut, duodenum, jejunum and ileum. Expression is higher in female than in male reproductive organs.

It is found in the secreted. The protein localises to the endomembrane system. Its function is as follows. Serine endoprotease that processes various proproteins by cleavage at paired basic amino acids, recognizing the RXXX[KR]R consensus motif. Likely functions in the constitutive and regulated secretory pathways. Plays an essential role in pregnancy establishment by proteolytic activation of a number of important factors such as BMP2, CALD1 and alpha-integrins. May be responsible for the maturation of gastrointestinal peptides. May be involved in the cellular proliferation of adrenal cortex via the activation of growth factors. This chain is Proprotein convertase subtilisin/kexin type 5 (Pcsk5), found in Rattus norvegicus (Rat).